Here is a 315-residue protein sequence, read N- to C-terminus: Methionyl-tRNA formyltransferase (315 aa).

Position 112–115 (112–115 (SLLP)) interacts with (6S)-5,6,7,8-tetrahydrofolate.

The protein belongs to the Fmt family.

It carries out the reaction L-methionyl-tRNA(fMet) + (6R)-10-formyltetrahydrofolate = N-formyl-L-methionyl-tRNA(fMet) + (6S)-5,6,7,8-tetrahydrofolate + H(+). Its function is as follows. Attaches a formyl group to the free amino group of methionyl-tRNA(fMet). The formyl group appears to play a dual role in the initiator identity of N-formylmethionyl-tRNA by promoting its recognition by IF2 and preventing the misappropriation of this tRNA by the elongation apparatus. This chain is Methionyl-tRNA formyltransferase, found in Leptospira interrogans serogroup Icterohaemorrhagiae serovar copenhageni (strain Fiocruz L1-130).